The primary structure comprises 778 residues: Protein translocase subunit SecA 2 (778 aa).

Residues Gln-94, 112–116 (GEGKT), and Asp-501 each bind ATP.

Belongs to the SecA family. In terms of assembly, monomer and homodimer. Part of the essential Sec protein translocation apparatus which comprises SecA, SecYEG and auxiliary proteins SecDF. Other proteins may also be involved.

It is found in the cell membrane. The protein localises to the cytoplasm. The catalysed reaction is ATP + H2O + cellular proteinSide 1 = ADP + phosphate + cellular proteinSide 2.. Its function is as follows. Part of the Sec protein translocase complex. Interacts with the SecYEG preprotein conducting channel. Has a central role in coupling the hydrolysis of ATP to the transfer of proteins into and across the cell membrane, serving as an ATP-driven molecular motor driving the stepwise translocation of polypeptide chains across the membrane. The sequence is that of Protein translocase subunit SecA 2 from Mycobacterium leprae (strain TN).